The primary structure comprises 196 residues: GTP cyclohydrolase-2 (196 aa).

49–53 is a binding site for GTP; sequence RVHSE. Residues Cys-54, Cys-65, and Cys-67 each coordinate Zn(2+). Residues Gln-70, 92–94, and Thr-114 contribute to the GTP site; that span reads EGR. Asp-126 acts as the Proton acceptor in catalysis. Arg-128 functions as the Nucleophile in the catalytic mechanism. GTP-binding residues include Thr-149 and Lys-154.

The protein belongs to the GTP cyclohydrolase II family. In terms of assembly, homodimer. The cofactor is Zn(2+).

It catalyses the reaction GTP + 4 H2O = 2,5-diamino-6-hydroxy-4-(5-phosphoribosylamino)-pyrimidine + formate + 2 phosphate + 3 H(+). It functions in the pathway cofactor biosynthesis; riboflavin biosynthesis; 5-amino-6-(D-ribitylamino)uracil from GTP: step 1/4. Its function is as follows. Catalyzes the conversion of GTP to 2,5-diamino-6-ribosylamino-4(3H)-pyrimidinone 5'-phosphate (DARP), formate and pyrophosphate. This chain is GTP cyclohydrolase-2, found in Escherichia coli O127:H6 (strain E2348/69 / EPEC).